The chain runs to 568 residues: Type 2 DNA topoisomerase 6 subunit B (568 aa).

ATP is bound by residues asparagine 46, aspartate 78, 99–100, 109–116, and lysine 473; these read TK and GQQGIGIS.

The protein belongs to the TOP6B family. As to quaternary structure, homodimer. Heterotetramer of two Top6A and two Top6B chains.

The catalysed reaction is ATP-dependent breakage, passage and rejoining of double-stranded DNA.. Functionally, relaxes both positive and negative superturns and exhibits a strong decatenase activity. The protein is Type 2 DNA topoisomerase 6 subunit B of Pyrococcus furiosus (strain ATCC 43587 / DSM 3638 / JCM 8422 / Vc1).